Reading from the N-terminus, the 1149-residue chain is MSLVQSHGTSGLFTEPPNSINQQESSGPSLPAQDATQASASSARAGATPAINSTKRKYRGAVVAQRATLSISAILDNGQCVQIKYHSNLASALTNLCNTNLYDLPACLNKPITVHNLPTLIEEAAASYSLIYYYQRGTVRKVEFRAEIPLLSFPLKFLVKHGKVFLIKDISPMQRCEFCGSFFKVTHTCTLRRRDFYFHHVASHSGDWWEKISFSPIGAPANTERLFIVYDVETYTWHGKFGKQLVPFMLVFQLLGDEHLVNAAKNLATTQNWDTWNSNEQTALYYCITPEKRAIGVKFKTFRDTLQQHFANNLWSHVLCQNPKLMEEAAALGLENPEDITANQLKKFKLQGTPRFIEVYVVGHNITGFDEILLAAQVVSTRAEIPPVFDISRNFMPRAGRLLFNDITYSLPNPSYVPSKDYRHWEQGQVLASDLKTQYIKFMVRDTFSLTHTSLKNAAKAYSLTVSKGCCPYQAVNEFYMLGSYQQDADGFPDLKYWKDQEEYCFNKDLWKKEKKGAYDIIQQTLDYCALDVQVTAQLVNKLIESYQIFIKNSVNLPETYFNVFQRPTISSNSHAIFKQILYRAEKPNAPHLNTIIMAPSNEMYEYVRLSIRGGRCYPTYIGVLQEPVFVYDICGMYASALTHPFPAGSPLNPYERAVAIKAYEHKMQEHKTISYFDEDLLPGIFTIDADPPAEEFLDVLPPFCSRKGGRLCWTNEPLRGEVTTSIDVITLHNRGWKVTLIPDTRTTVFPEWKCLAREYVQLNINAKEKADKSKNQTMRSIAKLLSNALYGSFATKLDNKKTVFSDQIESNIAKEIASGAYVVKSSSYIETDNLCAEIMPEFVVAYPPVNFDVHRLAPPSYSEEYPTENPHAEGPFMQNFNMTSYRYKPIMFIDAEDDDFCLHTLEKSTPLITNNRYASQIASFVLAWTRAFVSEWSQFLYENDAGIPLEKRILKSVYGDTDSLFTTMEGYRLMEEKGKRRLKKNGGNLVFDPNNPELTWLVECETKCEKCGADAYSSESVYLAPKLYALKDTTCPECQYVGKGKLRAKGHATSTLSYDVLKACYYADLQQGSDIFKTSRMSLRRTLTSVQTHVQPFTVTETTLTRKLRPWKDKTLHALDMNRLIPYSRKYPNPRNNETTWMELQWMT.

Positions 1-28 (MSLVQSHGTSGLFTEPPNSINQQESSGP) are enriched in polar residues. The disordered stretch occupies residues 1-49 (MSLVQSHGTSGLFTEPPNSINQQESSGPSLPAQDATQASASSARAGATP). Residues 31-49 (PAQDATQASASSARAGATP) are compositionally biased toward low complexity.

Belongs to the DNA polymerase type-B family. Heterodimer with the terminal protein; this heterodimer binds to bp 9 to 18 of the genome. Forms a complex with viral pTP, DBP and hosts NFIA and POU2F1/OCT1 for initiation of replication.

The protein resides in the host nucleus. It carries out the reaction DNA(n) + a 2'-deoxyribonucleoside 5'-triphosphate = DNA(n+1) + diphosphate. Eukaryotic-type DNA polymerase involved in viral genomic replication. DNA synthesis is protein primed, and acts in a strand displacement replication. Assembles in complex with viral pTP, DBP, host NFIA and host POU2F1/OCT1 on viral origin of replication. The polymerase covalently transfers dCMP onto pTP, thereby initiating complementary strand synthesis. The polypeptide is DNA polymerase (Canine adenovirus serotype 1 (strain CLL) (CAdV-1)).